Consider the following 464-residue polypeptide: Calcitonin gene-related peptide type 1 receptor (464 aa).

Positions methionine 1–alanine 23 are cleaved as a signal peptide. Over glutamate 24 to leucine 139 the chain is Extracellular. Asparagine 30, asparagine 66, asparagine 118, asparagine 123, asparagine 128, and asparagine 129 each carry an N-linked (GlcNAc...) asparagine glycan. 3 disulfides stabilise this stretch: cysteine 48/cysteine 74, cysteine 65/cysteine 105, and cysteine 88/cysteine 127. The helical transmembrane segment at asparagine 140–phenylalanine 164 threads the bilayer. Residues tyrosine 165–threonine 175 lie on the Cytoplasmic side of the membrane. A helical transmembrane segment spans residues leucine 176 to valine 198. Topologically, residues alanine 199–proline 209 are extracellular. A helical transmembrane segment spans residues valine 210 to histidine 238. Residues threonine 239–leucine 252 are Cytoplasmic-facing. Residues methionine 253–alanine 273 traverse the membrane as a helical segment. Topologically, residues arginine 274–histidine 289 are extracellular. Residues threonine 288 to histidine 289 are required for RAMP3 interaction. Residues leucine 290–arginine 314 traverse the membrane as a helical segment. At valine 315–asparagine 329 the chain is on the cytoplasmic side. The helical transmembrane segment at leucine 330 to leucine 351 threads the bilayer. Residues phenylalanine 352 to aspartate 366 are Extracellular-facing. The chain crosses the membrane as a helical span at residues tyrosine 367–phenylalanine 387. Topologically, residues asparagine 388–methionine 464 are cytoplasmic. Phosphoserine is present on residues serine 420 and serine 445.

This sequence belongs to the G-protein coupled receptor 2 family. Heterodimer of CALCRL and RAMP1; the receptor complex functions as CGRP receptor. Heterodimer of CALCRL and RAMP2 or CALCRL and RAMP3; the complexes function as adrenomedullin receptor.

The protein resides in the cell membrane. G protein-coupled receptor which specificity is determined by its interaction with receptor-activity-modifying proteins (RAMPs). Together with RAMP1, form the receptor complex for calcitonin-gene-related peptides CALCA/CGRP1 and CALCB/CGRP2. Together with RAMP2 or RAMP3, function as receptor complexes for adrenomedullin (ADM and ADM2). Ligand binding causes a conformation change that triggers signaling via guanine nucleotide-binding proteins (G proteins) and modulates the activity of downstream effectors. Activates cAMP-dependent pathway. In Rattus norvegicus (Rat), this protein is Calcitonin gene-related peptide type 1 receptor.